The following is a 238-amino-acid chain: Probable succinyl-CoA:3-ketoacid coenzyme A transferase subunit A (238 aa).

24–30 is a CoA binding site; it reads GGFGLCG.

The protein belongs to the 3-oxoacid CoA-transferase subunit A family. Heterodimer of a subunit A and a subunit B.

It carries out the reaction a 3-oxo acid + succinyl-CoA = a 3-oxoacyl-CoA + succinate. The sequence is that of Probable succinyl-CoA:3-ketoacid coenzyme A transferase subunit A (scoA) from Bacillus subtilis (strain 168).